We begin with the raw amino-acid sequence, 319 residues long: Malate dehydrogenase (319 aa).

NAD(+)-binding positions include 10-15 and aspartate 34; that span reads GAGNIG. Substrate contacts are provided by arginine 83 and arginine 89. Residues asparagine 96 and 119–121 each bind NAD(+); that span reads ITN. Substrate contacts are provided by asparagine 121 and arginine 152. Catalysis depends on histidine 176, which acts as the Proton acceptor.

It belongs to the LDH/MDH superfamily. MDH type 3 family.

It catalyses the reaction (S)-malate + NAD(+) = oxaloacetate + NADH + H(+). Functionally, catalyzes the reversible oxidation of malate to oxaloacetate. The polypeptide is Malate dehydrogenase (Francisella tularensis subsp. tularensis (strain FSC 198)).